Here is a 293-residue protein sequence, read N- to C-terminus: Ribosomal protein L11 methyltransferase (293 aa).

Residues Thr-145, Gly-166, Asp-188, and Asn-230 each coordinate S-adenosyl-L-methionine.

This sequence belongs to the methyltransferase superfamily. PrmA family.

Its subcellular location is the cytoplasm. The enzyme catalyses L-lysyl-[protein] + 3 S-adenosyl-L-methionine = N(6),N(6),N(6)-trimethyl-L-lysyl-[protein] + 3 S-adenosyl-L-homocysteine + 3 H(+). Functionally, methylates ribosomal protein L11. This is Ribosomal protein L11 methyltransferase from Escherichia coli O81 (strain ED1a).